A 211-amino-acid chain; its full sequence is MARRSQGTKLHLAVLCLVVSCHAIGLSDLMERASQRSDKLHSLSTSLTKDLDSHFPPMGRVMMPRPSMCHTSSLQTPKDKEQALKVSENELISLARYLLLAWNDPLLLLSSEAPTLPHTPSNGDISSKIRELQDYSKSLGDGLDIMVNKMGPSSQYISSIPFKGGDLGNDKTSRLINFHFLMSCFRRDSHKIDSFLKVLRCRATNMRPETC.

A signal peptide spans 1-23; that stretch reads MARRSQGTKLHLAVLCLVVSCHA. 2 cysteine pairs are disulfide-bonded: Cys69-Cys184 and Cys201-Cys211.

It belongs to the somatotropin/prolactin family.

The protein localises to the secreted. The protein is Prolactin-1 (prl1) of Oncorhynchus keta (Chum salmon).